Here is a 106-residue protein sequence, read N- to C-terminus: NADH-quinone oxidoreductase subunit K (106 aa).

3 helical membrane passes run 10-30 (VTYI…GVLI), 34-54 (IVII…VFVT), and 67-87 (IVFF…ALVI).

This sequence belongs to the complex I subunit 4L family. In terms of assembly, NDH-1 is composed of 14 different subunits. Subunits NuoA, H, J, K, L, M, N constitute the membrane sector of the complex.

The protein localises to the cell inner membrane. It catalyses the reaction a quinone + NADH + 5 H(+)(in) = a quinol + NAD(+) + 4 H(+)(out). Functionally, NDH-1 shuttles electrons from NADH, via FMN and iron-sulfur (Fe-S) centers, to quinones in the respiratory chain. The immediate electron acceptor for the enzyme in this species is believed to be ubiquinone. Couples the redox reaction to proton translocation (for every two electrons transferred, four hydrogen ions are translocated across the cytoplasmic membrane), and thus conserves the redox energy in a proton gradient. This Leptospira biflexa serovar Patoc (strain Patoc 1 / Ames) protein is NADH-quinone oxidoreductase subunit K.